Reading from the N-terminus, the 72-residue chain is Translation initiation factor IF-1 (72 aa).

Residues 1 to 72 form the S1-like domain; it reads MSKSDYIELE…TKGRITFRHK (72 aa).

The protein belongs to the IF-1 family. As to quaternary structure, component of the 30S ribosomal translation pre-initiation complex which assembles on the 30S ribosome in the order IF-2 and IF-3, IF-1 and N-formylmethionyl-tRNA(fMet); mRNA recruitment can occur at any time during PIC assembly.

It localises to the cytoplasm. In terms of biological role, one of the essential components for the initiation of protein synthesis. Stabilizes the binding of IF-2 and IF-3 on the 30S subunit to which N-formylmethionyl-tRNA(fMet) subsequently binds. Helps modulate mRNA selection, yielding the 30S pre-initiation complex (PIC). Upon addition of the 50S ribosomal subunit IF-1, IF-2 and IF-3 are released leaving the mature 70S translation initiation complex. The sequence is that of Translation initiation factor IF-1 from Vesicomyosocius okutanii subsp. Calyptogena okutanii (strain HA).